The chain runs to 507 residues: ATP synthase subunit alpha, chloroplastic (507 aa).

Residue 170-177 (GDRQTGKT) coordinates ATP.

Belongs to the ATPase alpha/beta chains family. In terms of assembly, F-type ATPases have 2 components, CF(1) - the catalytic core - and CF(0) - the membrane proton channel. CF(1) has five subunits: alpha(3), beta(3), gamma(1), delta(1), epsilon(1). CF(0) has four main subunits: a, b, b' and c.

It localises to the plastid. The protein localises to the chloroplast thylakoid membrane. It catalyses the reaction ATP + H2O + 4 H(+)(in) = ADP + phosphate + 5 H(+)(out). Its function is as follows. Produces ATP from ADP in the presence of a proton gradient across the membrane. The alpha chain is a regulatory subunit. This is ATP synthase subunit alpha, chloroplastic from Buxus microphylla (Littleleaf boxwood).